Consider the following 228-residue polypeptide: Cytidylate kinase (228 aa).

17–25 provides a ligand contact to ATP; sequence GPSASGKGT.

It belongs to the cytidylate kinase family. Type 1 subfamily.

It localises to the cytoplasm. The catalysed reaction is CMP + ATP = CDP + ADP. It catalyses the reaction dCMP + ATP = dCDP + ADP. This is Cytidylate kinase from Paraburkholderia phytofirmans (strain DSM 17436 / LMG 22146 / PsJN) (Burkholderia phytofirmans).